The chain runs to 470 residues: Argininosuccinate lyase (470 aa).

Belongs to the lyase 1 family. Argininosuccinate lyase subfamily.

The protein resides in the cytoplasm. It catalyses the reaction 2-(N(omega)-L-arginino)succinate = fumarate + L-arginine. It participates in amino-acid biosynthesis; L-arginine biosynthesis; L-arginine from L-ornithine and carbamoyl phosphate: step 3/3. The polypeptide is Argininosuccinate lyase (Bordetella avium (strain 197N)).